The chain runs to 387 residues: Protein salvador homolog 1 (387 aa).

2 positions are modified to phosphoserine: serine 95 and serine 138. WW domains follow at residues 201-234 (LPLP…HPLE) and 236-269 (EGLP…HPCA). A Phosphothreonine modification is found at threonine 212. In terms of domain architecture, SARAH spans 323–370 (ILKWELFQLADLDTYQGMLKLLFMKELEQIVKLYEAYRQALVTELENR).

Homodimer. Stabilized through interaction with STK3/MST2 or STK4/MST1. Interacts (via SARAH domain) with isoform 1 of NEK2. Interacts with ESR1 only in the presence of STK3/MST2. Interacts with WTIP and AJUBA. Phosphorylated by STK3/MST2 and STK4/MST1. Phosphorylation is not required for SAV1 stability and may increase the number of protein binding sites on the scaffold molecule.

Its subcellular location is the nucleus. It is found in the cytoplasm. Functionally, regulator of STK3/MST2 and STK4/MST1 in the Hippo signaling pathway which plays a pivotal role in organ size control and tumor suppression by restricting proliferation and promoting apoptosis. The core of this pathway is composed of a kinase cascade wherein STK3/MST2 and STK4/MST1, in complex with its regulatory protein SAV1, phosphorylates and activates LATS1/2 in complex with its regulatory protein MOB1, which in turn phosphorylates and inactivates YAP1 oncoprotein and WWTR1/TAZ. Phosphorylation of YAP1 by LATS1/2 inhibits its translocation into the nucleus to regulate cellular genes important for cell proliferation, cell death, and cell migration. SAV1 is required for STK3/MST2 and STK4/MST1 activation and promotes cell-cycle exit and terminal differentiation in developing epithelial tissues. Plays a role in centrosome disjunction by regulating the localization of NEK2 to centrosomes, and its ability to phosphorylate CROCC and CEP250. In conjunction with STK3/MST2, activates the transcriptional activity of ESR1 through the modulation of its phosphorylation. The polypeptide is Protein salvador homolog 1 (Rattus norvegicus (Rat)).